A 188-amino-acid polypeptide reads, in one-letter code: MTTIAKQDKIFMKRSGAYHSELDKDIVQKAGNFPLMQFKTKVKVNPKFLLKGDDMDIVDEAITYYKANVFYKNFDMSICEADKLLVYLIFYIQSLLLKFNGRTKVECDKMAYSLAIENFALPGDGKFCLGGIVEPLKASEKEVVRQYMTAIRNETGLRLTQAVFKNDPTKCDKWWMCFNKRKFLNKTI.

Belongs to the ARPC3 family. As to quaternary structure, component of the Arp2/3 complex.

It localises to the cytoplasm. Its subcellular location is the cytoskeleton. In terms of biological role, functions as a component of the Arp2/3 complex which is involved in regulation of actin polymerization and together with an activating nucleation-promoting factor (NPF) mediates the formation of branched actin networks. The sequence is that of Actin-related protein 2/3 complex subunit 3 from Entamoeba histolytica (strain ATCC 30459 / HM-1:IMSS / ABRM).